The chain runs to 243 residues: 7-cyano-7-deazaguanine synthase (243 aa).

9 to 19 (FSGGQDSTTCL) provides a ligand contact to ATP. Zn(2+) contacts are provided by C205, C220, C223, and C226.

Belongs to the QueC family. Requires Zn(2+) as cofactor.

The enzyme catalyses 7-carboxy-7-deazaguanine + NH4(+) + ATP = 7-cyano-7-deazaguanine + ADP + phosphate + H2O + H(+). It participates in purine metabolism; 7-cyano-7-deazaguanine biosynthesis. Functionally, catalyzes the ATP-dependent conversion of 7-carboxy-7-deazaguanine (CDG) to 7-cyano-7-deazaguanine (preQ(0)). The chain is 7-cyano-7-deazaguanine synthase from Albidiferax ferrireducens (strain ATCC BAA-621 / DSM 15236 / T118) (Rhodoferax ferrireducens).